The following is a 139-amino-acid chain: Putative pre-16S rRNA nuclease (139 aa).

The protein belongs to the YqgF nuclease family.

Its subcellular location is the cytoplasm. In terms of biological role, could be a nuclease involved in processing of the 5'-end of pre-16S rRNA. This is Putative pre-16S rRNA nuclease from Streptococcus mutans serotype c (strain ATCC 700610 / UA159).